A 716-amino-acid polypeptide reads, in one-letter code: Translation initiation factor IF-2 (716 aa).

Positions 53-135 are disordered; the sequence is GGAGVTSQKP…PLKPKKELPE (83 aa). Polar residues predominate over residues 57-83; sequence VTSQKPAETNKNKPQGINQQPAGNQPN. Low complexity predominate over residues 93–109; sequence VQNNQFNKNKKNNNNNK. The tr-type G domain occupies 217 to 386; it reads IRPPVVTIMG…LLVSEVEELK (170 aa). The G1 stretch occupies residues 226-233; sequence GHVDHGKT. Position 226–233 (226–233) interacts with GTP; that stretch reads GHVDHGKT. Positions 251–255 are G2; the sequence is GITQH. Residues 272-275 are G3; it reads DTPG. Residues 272-276 and 326-329 each bind GTP; these read DTPGH and NKVD. The interval 326–329 is G4; that stretch reads NKVD. Residues 362-364 are G5; that stretch reads SAL.

Belongs to the TRAFAC class translation factor GTPase superfamily. Classic translation factor GTPase family. IF-2 subfamily.

The protein resides in the cytoplasm. One of the essential components for the initiation of protein synthesis. Protects formylmethionyl-tRNA from spontaneous hydrolysis and promotes its binding to the 30S ribosomal subunits. Also involved in the hydrolysis of GTP during the formation of the 70S ribosomal complex. This chain is Translation initiation factor IF-2, found in Bacillus velezensis (strain DSM 23117 / BGSC 10A6 / LMG 26770 / FZB42) (Bacillus amyloliquefaciens subsp. plantarum).